The following is a 443-amino-acid chain: Ribitol-5-phosphate xylosyltransferase 1 (443 aa).

At Met-1–Cys-9 the chain is on the cytoplasmic side. A helical; Signal-anchor for type II membrane protein transmembrane segment spans residues Ser-10–Gly-30. Residues Arg-31–Ser-443 lie on the Extracellular side of the membrane. The interval Ala-35 to Glu-76 is disordered. Over residues Ala-50 to Ser-59 the composition is skewed to basic and acidic residues.

It belongs to the RXYLT1 family. As to quaternary structure, forms a complex composed of FKTN/fukutin, FKRP and RXYLT1/TMEM5.

It localises to the golgi apparatus membrane. The catalysed reaction is 3-O-[Rib-ol-P-Rib-ol-P-3-beta-D-GalNAc-(1-&gt;3)-beta-D-GlcNAc-(1-&gt;4)-(O-6-P-alpha-D-Man)]-Thr-[protein] + UDP-alpha-D-xylose = 3-O-[beta-D-Xyl-(1-&gt;4)-Rib-ol-P-Rib-ol-P-3-beta-D-GalNAc-(1-&gt;3)-beta-D-GlcNAc-(1-&gt;4)-(O-6-P-alpha-D-Man)]-Thr-[protein] + UDP + H(+). It functions in the pathway protein modification; protein glycosylation. Its function is as follows. Acts as a UDP-D-xylose:ribitol-5-phosphate beta1,4-xylosyltransferase, which catalyzes the transfer of UDP-D-xylose to ribitol 5-phosphate (Rbo5P) to form the Xylbeta1-4Rbo5P linkage on O-mannosyl glycan. Participates in the biosynthesis of the phosphorylated O-mannosyl trisaccharide (N-acetylgalactosamine-beta-3-N-acetylglucosamine-beta-4-(phosphate-6-)mannose), a carbohydrate structure present in alpha-dystroglycan (DAG1), which is required for binding laminin G-like domain-containing extracellular proteins with high affinity. The protein is Ribitol-5-phosphate xylosyltransferase 1 of Homo sapiens (Human).